We begin with the raw amino-acid sequence, 243 residues long: Carboxy-S-adenosyl-L-methionine synthase (243 aa).

S-adenosyl-L-methionine is bound by residues Y35, G68–S70, D92–N93, and R199.

Belongs to the class I-like SAM-binding methyltransferase superfamily. Cx-SAM synthase family. As to quaternary structure, homodimer.

It catalyses the reaction prephenate + S-adenosyl-L-methionine = carboxy-S-adenosyl-L-methionine + 3-phenylpyruvate + H2O. Functionally, catalyzes the conversion of S-adenosyl-L-methionine (SAM) to carboxy-S-adenosyl-L-methionine (Cx-SAM). The protein is Carboxy-S-adenosyl-L-methionine synthase of Helicobacter pylori (strain P12).